A 334-amino-acid chain; its full sequence is N-acetyl-gamma-glutamyl-phosphate reductase (334 aa).

C154 is an active-site residue.

The protein belongs to the NAGSA dehydrogenase family. Type 1 subfamily.

It is found in the cytoplasm. The enzyme catalyses N-acetyl-L-glutamate 5-semialdehyde + phosphate + NADP(+) = N-acetyl-L-glutamyl 5-phosphate + NADPH + H(+). The protein operates within amino-acid biosynthesis; L-arginine biosynthesis; N(2)-acetyl-L-ornithine from L-glutamate: step 3/4. Catalyzes the NADPH-dependent reduction of N-acetyl-5-glutamyl phosphate to yield N-acetyl-L-glutamate 5-semialdehyde. The protein is N-acetyl-gamma-glutamyl-phosphate reductase of Escherichia coli O6:H1 (strain CFT073 / ATCC 700928 / UPEC).